A 1342-amino-acid chain; its full sequence is DNA-directed RNA polymerase subunit beta (1342 aa).

The protein belongs to the RNA polymerase beta chain family. The RNAP catalytic core consists of 2 alpha, 1 beta, 1 beta' and 1 omega subunit. When a sigma factor is associated with the core the holoenzyme is formed, which can initiate transcription.

The enzyme catalyses RNA(n) + a ribonucleoside 5'-triphosphate = RNA(n+1) + diphosphate. DNA-dependent RNA polymerase catalyzes the transcription of DNA into RNA using the four ribonucleoside triphosphates as substrates. The sequence is that of DNA-directed RNA polymerase subunit beta from Histophilus somni (strain 2336) (Haemophilus somnus).